A 528-amino-acid polypeptide reads, in one-letter code: Coiled-coil domain-containing protein 116 (528 aa).

The disordered stretch occupies residues 43–68 (GHVPHPPSTCGSSALQNQRRNKRHPQ). Positions 51-60 (TCGSSALQNQ) are enriched in polar residues. Residues 81 to 104 (HVLDSLETVVEKATERMAAMKTEA) adopt a coiled-coil conformation. 2 disordered regions span residues 335 to 444 (PLFP…RQRA) and 497 to 528 (SSSP…THHS). The span at 363-378 (PTNSGQPHPTVSSPKT) shows a compositional bias: polar residues. S389 is modified (phosphoserine). Over residues 419 to 429 (HSREKEPDSDP) the composition is skewed to basic and acidic residues. Polar residues predominate over residues 434-443 (PPVSLSSRQR). Residues 497–510 (SSSPSSLCPEVTSS) are compositionally biased toward low complexity.

It localises to the cytoplasm. It is found in the cytoskeleton. The protein localises to the microtubule organizing center. Its subcellular location is the centrosome. This Macaca fascicularis (Crab-eating macaque) protein is Coiled-coil domain-containing protein 116 (CCDC116).